The primary structure comprises 695 residues: Tripartite terminase subunit 1 (695 aa).

Residues 182 to 210 form a C3H1-type zinc finger; it reads CLECLQEVCLTPNQGTSLQAMLPDTACSH. 621–628 provides a ligand contact to ATP; it reads YNRTWERE.

The protein belongs to the herpesviridae TRM1 protein family. As to quaternary structure, associates with TRM2 and TRM3 to form the tripartite terminase complex. Interacts with portal protein.

It is found in the host nucleus. Functionally, component of the molecular motor that translocates viral genomic DNA in empty capsid during DNA packaging. Forms a tripartite terminase complex together with TRM2 and TRM3 in the host cytoplasm. Once the complex reaches the host nucleus, it interacts with the capsid portal vertex. This portal forms a ring in which genomic DNA is translocated into the capsid. TRM1 carries an endonuclease activity that plays an important role for the cleavage of concatemeric viral DNA into unit length genomes. This Homo sapiens (Human) protein is Tripartite terminase subunit 1.